Here is a 271-residue protein sequence, read N- to C-terminus: Tryptophan synthase alpha chain (271 aa).

Residues Glu49 and Asp60 each act as proton acceptor in the active site.

The protein belongs to the TrpA family. In terms of assembly, tetramer of two alpha and two beta chains.

The enzyme catalyses (1S,2R)-1-C-(indol-3-yl)glycerol 3-phosphate + L-serine = D-glyceraldehyde 3-phosphate + L-tryptophan + H2O. The protein operates within amino-acid biosynthesis; L-tryptophan biosynthesis; L-tryptophan from chorismate: step 5/5. In terms of biological role, the alpha subunit is responsible for the aldol cleavage of indoleglycerol phosphate to indole and glyceraldehyde 3-phosphate. The chain is Tryptophan synthase alpha chain from Buchnera aphidicola subsp. Schizaphis graminum (strain Sg).